The following is a 222-amino-acid chain: Thymidylate kinase (222 aa).

10 to 17 lines the ATP pocket; the sequence is GLEGAGKS.

This sequence belongs to the thymidylate kinase family.

The enzyme catalyses dTMP + ATP = dTDP + ADP. Phosphorylation of dTMP to form dTDP in both de novo and salvage pathways of dTTP synthesis. The sequence is that of Thymidylate kinase from Alteromonas mediterranea (strain DSM 17117 / CIP 110805 / LMG 28347 / Deep ecotype).